We begin with the raw amino-acid sequence, 280 residues long: 2-dehydro-3-deoxyphosphooctonate aldolase (280 aa).

Belongs to the KdsA family.

The protein resides in the cytoplasm. It carries out the reaction D-arabinose 5-phosphate + phosphoenolpyruvate + H2O = 3-deoxy-alpha-D-manno-2-octulosonate-8-phosphate + phosphate. It participates in carbohydrate biosynthesis; 3-deoxy-D-manno-octulosonate biosynthesis; 3-deoxy-D-manno-octulosonate from D-ribulose 5-phosphate: step 2/3. The protein operates within bacterial outer membrane biogenesis; lipopolysaccharide biosynthesis. The protein is 2-dehydro-3-deoxyphosphooctonate aldolase of Colwellia psychrerythraea (strain 34H / ATCC BAA-681) (Vibrio psychroerythus).